The sequence spans 333 residues: Phosphate acyltransferase (333 aa).

It belongs to the PlsX family. In terms of assembly, homodimer. Probably interacts with PlsY.

Its subcellular location is the cytoplasm. It catalyses the reaction a fatty acyl-[ACP] + phosphate = an acyl phosphate + holo-[ACP]. Its pathway is lipid metabolism; phospholipid metabolism. Its function is as follows. Catalyzes the reversible formation of acyl-phosphate (acyl-PO(4)) from acyl-[acyl-carrier-protein] (acyl-ACP). This enzyme utilizes acyl-ACP as fatty acyl donor, but not acyl-CoA. In Lactobacillus helveticus (strain DPC 4571), this protein is Phosphate acyltransferase.